The following is a 739-amino-acid chain: Phosphoribosylformylglycinamidine synthase subunit PurL (739 aa).

His53 is an active-site residue. Residues Tyr56 and Lys95 each contribute to the ATP site. Position 97 (Glu97) interacts with Mg(2+). Substrate-binding positions include Ser98–His101 and Arg120. The active-site Proton acceptor is the His99. Mg(2+) is bound at residue Asp121. Gln244 is a binding site for substrate. Asp274 is a binding site for Mg(2+). Glu318–Gln320 contributes to the substrate binding site. Asp501 and Gly538 together coordinate ATP. Asn539 is a Mg(2+) binding site. Ser541 is a substrate binding site.

Belongs to the FGAMS family. As to quaternary structure, monomer. Part of the FGAM synthase complex composed of 1 PurL, 1 PurQ and 2 PurS subunits.

Its subcellular location is the cytoplasm. The enzyme catalyses N(2)-formyl-N(1)-(5-phospho-beta-D-ribosyl)glycinamide + L-glutamine + ATP + H2O = 2-formamido-N(1)-(5-O-phospho-beta-D-ribosyl)acetamidine + L-glutamate + ADP + phosphate + H(+). It functions in the pathway purine metabolism; IMP biosynthesis via de novo pathway; 5-amino-1-(5-phospho-D-ribosyl)imidazole from N(2)-formyl-N(1)-(5-phospho-D-ribosyl)glycinamide: step 1/2. In terms of biological role, part of the phosphoribosylformylglycinamidine synthase complex involved in the purines biosynthetic pathway. Catalyzes the ATP-dependent conversion of formylglycinamide ribonucleotide (FGAR) and glutamine to yield formylglycinamidine ribonucleotide (FGAM) and glutamate. The FGAM synthase complex is composed of three subunits. PurQ produces an ammonia molecule by converting glutamine to glutamate. PurL transfers the ammonia molecule to FGAR to form FGAM in an ATP-dependent manner. PurS interacts with PurQ and PurL and is thought to assist in the transfer of the ammonia molecule from PurQ to PurL. The sequence is that of Phosphoribosylformylglycinamidine synthase subunit PurL from Listeria welshimeri serovar 6b (strain ATCC 35897 / DSM 20650 / CCUG 15529 / CIP 8149 / NCTC 11857 / SLCC 5334 / V8).